We begin with the raw amino-acid sequence, 307 residues long: Oxygen-dependent coproporphyrinogen-III oxidase (307 aa).

Ser99 is a binding site for substrate. Residues His103 and His113 each contribute to the a divalent metal cation site. The active-site Proton donor is His113. Residue 115–117 (NVR) coordinates substrate. 2 residues coordinate a divalent metal cation: His152 and His182. The segment at 247–282 (YVEFNLVFDRGTLFGLQSGGRTESILMSMPPVANWR) is important for dimerization. 265–267 (GGR) lines the substrate pocket.

Belongs to the aerobic coproporphyrinogen-III oxidase family. As to quaternary structure, homodimer. It depends on a divalent metal cation as a cofactor.

It is found in the cytoplasm. It catalyses the reaction coproporphyrinogen III + O2 + 2 H(+) = protoporphyrinogen IX + 2 CO2 + 2 H2O. Its pathway is porphyrin-containing compound metabolism; protoporphyrin-IX biosynthesis; protoporphyrinogen-IX from coproporphyrinogen-III (O2 route): step 1/1. Its function is as follows. Involved in the heme biosynthesis. Catalyzes the aerobic oxidative decarboxylation of propionate groups of rings A and B of coproporphyrinogen-III to yield the vinyl groups in protoporphyrinogen-IX. This Burkholderia multivorans (strain ATCC 17616 / 249) protein is Oxygen-dependent coproporphyrinogen-III oxidase.